The sequence spans 887 residues: Exosome complex component 10 (887 aa).

The segment covering 1 to 10 (MAPPSPREHQ) has biased composition (basic and acidic residues). The tract at residues 1–23 (MAPPSPREHQSAPATSATKPDAE) is disordered. Residue lysine 19 forms a Glycyl lysine isopeptide (Lys-Gly) (interchain with G-Cter in SUMO2) linkage. The 167-residue stretch at 289–455 (HLVSSLDELV…YIYDRMRLEL (167 aa)) folds into the 3'-5' exonuclease domain. Mg(2+) is bound by residues aspartate 313, glutamate 315, aspartate 371, and aspartate 440. Positions 503-583 (NSQQLTAFQL…QQAREMPLLK (81 aa)) constitute an HRDC domain. A Glycyl lysine isopeptide (Lys-Gly) (interchain with G-Cter in SUMO1); alternate cross-link involves residue lysine 583. Residue lysine 583 forms a Glycyl lysine isopeptide (Lys-Gly) (interchain with G-Cter in SUMO2); alternate linkage. Lysine 710 participates in a covalent cross-link: Glycyl lysine isopeptide (Lys-Gly) (interchain with G-Cter in SUMO2). Disordered regions lie at residues 734-757 (KEPK…AKEE) and 777-887 (NATK…WPKR). Residues 778–796 (ATKKRERATSDLRTIEQKQ) are compositionally biased toward basic and acidic residues. Serine 823 is modified (phosphoserine). Residues lysine 835, lysine 861, and lysine 875 each participate in a glycyl lysine isopeptide (Lys-Gly) (interchain with G-Cter in SUMO2) cross-link.

It belongs to the exosome component 10/RRP6 family. Component of the RNA exosome complex. The catalytically inactive RNA exosome core complex (Exo-9) associates with the catalytic subunit EXOSC10/RRP6 (via its N-terminus). Exo-9 may associate with DIS3 to form the nucleolar exosome complex, or DIS3L to form the cytoplasmic exosome complex. The RNA exosome complex interacts with cofactors C1D/RRP47, MPHOSPH6/MPP6 and MTREX/MTR4. Interacts with MTREX; the interaction with MTREX mediates the association of MTREX with nuclear RNA exosomes. Part of the small subunit (SSU) processome, composed of more than 70 proteins and the RNA chaperone small nucleolar RNA (snoRNA) U3. Interacts with ALYREF/THOC4. Interacts with DHX36; this interaction occurs in a RNase-insensitive manner. Interacts with NRDE2. Interacts (via C-terminus) with USP36 (via C-terminus); the interaction is facilitated by the association with RNA and promotes sumoylation of EXOSC10. Mg(2+) serves as cofactor. Post-translationally, sumoylated by USP36; sumoylation does not significantly affect EXOSC10 nucleolar localization and association with core exosome and USP36, but regulates the nucleolar RNA exosome activity in rRNA processing by promoting binding of EXOSC10 to pre-rRNAs. Effects of sumoylation on EXOSC10 levels vary between different studies. Sumoylation of EXOSC10 is required for the modulation of EXOSC10 effects on cellular protein translation and cell proliferation. Sumoylation is promoted by mild hypothermia. In terms of tissue distribution, expressed in ovary (at protein level). Expressed in testis (at protein level). Expressed in lung (at protein level).

The protein resides in the cytoplasm. The protein localises to the nucleus. It localises to the nucleolus. It is found in the nucleoplasm. Its function is as follows. Catalytic component of the RNA exosome complex which has 3'-&gt;5' exoribonuclease activity and participates in a multitude of cellular RNA processing and degradation events. In the nucleus, the RNA exosome complex is involved in proper maturation of stable RNA species such as rRNA, snRNA and snoRNA, in the elimination of RNA processing by-products and non-coding 'pervasive' transcripts, such as antisense RNA species and promoter-upstream transcripts (PROMPTs), and of mRNAs with processing defects, thereby limiting or excluding their export to the cytoplasm. Part of the small subunit (SSU) processome, first precursor of the small eukaryotic ribosomal subunit. During the assembly of the SSU processome in the nucleolus, many ribosome biogenesis factors, an RNA chaperone and ribosomal proteins associate with the nascent pre-rRNA and work in concert to generate RNA folding, modifications, rearrangements and cleavage as well as targeted degradation of pre-ribosomal RNA by the RNA exosome. The RNA exosome may be involved in Ig class switch recombination (CSR) and/or Ig variable region somatic hypermutation (SHM) by targeting AICDA deamination activity to transcribed dsDNA substrates. In the cytoplasm, the RNA exosome complex is involved in general mRNA turnover and specifically degrades inherently unstable mRNAs containing AU-rich elements (AREs) within their 3' untranslated regions, and in RNA surveillance pathways, preventing translation of aberrant mRNAs. It seems to be involved in degradation of histone mRNA. EXOSC10 is required for nucleolar localization of C1D and probably mediates the association of MTREX, C1D and MPHOSPH6 with the RNA exosome involved in the maturation of 5.8S rRNA. Plays a role in the recruitment of replication protein A complex (RPA) and RAD51 to DNA double-strand breaks caused by irradiation, contributing to DNA repair by homologous recombination. Regulates levels of damage-induced RNAs in order to prevent DNA-RNA hybrid formation at DNA double-strand breaks and limit DNA end resection after damage. Plays a role in oocyte development, maturation and survival. Required for normal testis development and mitotic division of spermatogonia. Plays a role in proper embryo development. Required for global protein translation. Required for cell proliferation. This Mus musculus (Mouse) protein is Exosome complex component 10 (Exosc10).